The chain runs to 433 residues: Phosphoribosylamine--glycine ligase (433 aa).

The ATP-grasp domain maps to 110 to 317; the sequence is RNFMKKYGIE…FVDIMSAVVK (208 aa). 137 to 194 serves as a coordination point for ATP; the sequence is IEKLGDVAVKPSGLTGGKGVKVMGDQLPDLKAAKAYTSELLEKGSVVIEERFIGEEFT. Mg(2+) contacts are provided by Gln-275, Glu-287, and Asn-289. Mn(2+) contacts are provided by Gln-275, Glu-287, and Asn-289.

Belongs to the GARS family. Requires Mg(2+) as cofactor. Mn(2+) serves as cofactor.

The catalysed reaction is 5-phospho-beta-D-ribosylamine + glycine + ATP = N(1)-(5-phospho-beta-D-ribosyl)glycinamide + ADP + phosphate + H(+). Its pathway is purine metabolism; IMP biosynthesis via de novo pathway; N(1)-(5-phospho-D-ribosyl)glycinamide from 5-phospho-alpha-D-ribose 1-diphosphate: step 2/2. This Methanosarcina barkeri (strain Fusaro / DSM 804) protein is Phosphoribosylamine--glycine ligase.